Here is a 317-residue protein sequence, read N- to C-terminus: Ciliary microtubule inner protein 2A (317 aa).

A disordered region spans residues 131-153; that stretch reads TPDTPHPPCPPGRKGDSRDLGHP.

Belongs to the CIMIP2 family. In terms of assembly, microtubule inner protein component of sperm flagellar doublet microtubules.

Its subcellular location is the cytoplasm. The protein resides in the cytoskeleton. The protein localises to the flagellum axoneme. Microtubule inner protein (MIP) part of the dynein-decorated doublet microtubules (DMTs) in flagellum axoneme. Binds to the intra-tubulin interfaces. The chain is Ciliary microtubule inner protein 2A from Homo sapiens (Human).